A 312-amino-acid chain; its full sequence is Methionyl-tRNA formyltransferase (312 aa).

(6S)-5,6,7,8-tetrahydrofolate is bound at residue 109-112 (SLLP).

The protein belongs to the Fmt family.

It carries out the reaction L-methionyl-tRNA(fMet) + (6R)-10-formyltetrahydrofolate = N-formyl-L-methionyl-tRNA(fMet) + (6S)-5,6,7,8-tetrahydrofolate + H(+). Its function is as follows. Attaches a formyl group to the free amino group of methionyl-tRNA(fMet). The formyl group appears to play a dual role in the initiator identity of N-formylmethionyl-tRNA by promoting its recognition by IF2 and preventing the misappropriation of this tRNA by the elongation apparatus. This chain is Methionyl-tRNA formyltransferase, found in Anaeromyxobacter sp. (strain K).